The primary structure comprises 271 residues: Thiazole synthase (271 aa).

Residue lysine 95 is the Schiff-base intermediate with DXP of the active site. Residues glycine 156, 182 to 183 (AG), and 204 to 205 (NT) each bind 1-deoxy-D-xylulose 5-phosphate.

The protein belongs to the ThiG family. As to quaternary structure, homotetramer. Forms heterodimers with either ThiH or ThiS.

It localises to the cytoplasm. The enzyme catalyses [ThiS sulfur-carrier protein]-C-terminal-Gly-aminoethanethioate + 2-iminoacetate + 1-deoxy-D-xylulose 5-phosphate = [ThiS sulfur-carrier protein]-C-terminal Gly-Gly + 2-[(2R,5Z)-2-carboxy-4-methylthiazol-5(2H)-ylidene]ethyl phosphate + 2 H2O + H(+). The protein operates within cofactor biosynthesis; thiamine diphosphate biosynthesis. Its function is as follows. Catalyzes the rearrangement of 1-deoxy-D-xylulose 5-phosphate (DXP) to produce the thiazole phosphate moiety of thiamine. Sulfur is provided by the thiocarboxylate moiety of the carrier protein ThiS. In vitro, sulfur can be provided by H(2)S. The sequence is that of Thiazole synthase from Yersinia pseudotuberculosis serotype O:3 (strain YPIII).